The following is a 138-amino-acid chain: Large ribosomal subunit protein uL16 (138 aa).

Belongs to the universal ribosomal protein uL16 family. In terms of assembly, part of the 50S ribosomal subunit.

In terms of biological role, binds 23S rRNA and is also seen to make contacts with the A and possibly P site tRNAs. This Gluconobacter oxydans (strain 621H) (Gluconobacter suboxydans) protein is Large ribosomal subunit protein uL16.